The sequence spans 51 residues: U-Asilidin(1)-Mar1a (51 aa).

The N-terminal stretch at 1 to 23 (MANYIEVFSVLAIIFATVLAALA) is a signal peptide. Disulfide bonds link Cys26–Cys40, Cys33–Cys44, and Cys39–Cys49.

Belongs to the asilidin-1 family. Expressed by the venom gland. Is the most highly expressed peptide and is around 3000 times higher expressed in the thoracic glands compared to its body tissues.

It localises to the secreted. In terms of biological role, induces neurotoxic effect on honeybees, including slow movements, disorientation and paralysis. Since it provokes similar symptoms than omega-atracotoxin, it is probable that it acts in the same way by inhibiting voltage-gated calcium channels. The protein is U-Asilidin(1)-Mar1a of Machimus arthriticus (Breck robberfly).